The primary structure comprises 373 residues: Putative F-box/kelch-repeat protein At5g24040 (373 aa).

The F-box domain maps to 2-50 (VKWSELPPEILHLISLKIDNPFDLIHFRSVCSFWRSSSLLKFRHMTSLR). 2 Kelch repeats span residues 165–207 (NEYM…PFKG) and 262–308 (YDFH…CTFS).

The sequence is that of Putative F-box/kelch-repeat protein At5g24040 from Arabidopsis thaliana (Mouse-ear cress).